The chain runs to 690 residues: Protein arginine N-methyltransferase 7 (690 aa).

SAM-dependent MTase PRMT-type domains are found at residues 5 to 355 (FQDS…FSLW) and 364 to 690 (KEPL…EEEQ).

The protein belongs to the class I-like SAM-binding methyltransferase superfamily. Protein arginine N-methyltransferase family. PRMT7 subfamily.

Functionally, essential arginine methyltransferase that can both catalyze the formation of omega-N monomethylarginine (MMA) and symmetrical dimethylarginine (sDMA). Specifically mediates the symmetrical dimethylation of arginine residues in the small nuclear ribonucleoproteins SmD1 and SmD3. This is Protein arginine N-methyltransferase 7 (Art7) from Anopheles gambiae (African malaria mosquito).